A 434-amino-acid chain; its full sequence is D-amino acid dehydrogenase (434 aa).

3–17 contacts FAD; that stretch reads VVILGSGVVGVASAW.

It belongs to the DadA oxidoreductase family. FAD is required as a cofactor.

The enzyme catalyses a D-alpha-amino acid + A + H2O = a 2-oxocarboxylate + AH2 + NH4(+). Its pathway is amino-acid degradation; D-alanine degradation; NH(3) and pyruvate from D-alanine: step 1/1. Its function is as follows. Oxidative deamination of D-amino acids. This Serratia proteamaculans (strain 568) protein is D-amino acid dehydrogenase.